Consider the following 90-residue polypeptide: uncharacterized protein (90 aa).

K88 is covalently cross-linked (Isoglutamyl lysine isopeptide (Lys-Gln) (interchain with Q-Cter in protein Pup)).

This is an uncharacterized protein from Mycolicibacterium smegmatis (strain ATCC 700084 / mc(2)155) (Mycobacterium smegmatis).